The sequence spans 151 residues: Protein SprT-like (151 aa).

The SprT-like domain occupies 6–147 (LQRMVENLSE…GHCNGKLRMK (142 aa)). H67 is a Zn(2+) binding site. Residue E68 is part of the active site. H71 lines the Zn(2+) pocket.

This sequence belongs to the SprT family. The cofactor is Zn(2+).

The protein resides in the cytoplasm. The chain is Protein SprT-like from Staphylococcus aureus (strain Mu3 / ATCC 700698).